Reading from the N-terminus, the 242-residue chain is HTH domain-truncated transcriptional regulator QseD (242 aa).

It belongs to the LysR transcriptional regulatory family.

Functionally, represses EHEC virulence expression. Down-regulates expression of LEE (locus of enterocyte effacement) and iraD genes, and alters AE (attaching and effacing) lesion formation. May regulate transcription through interactions with another HTH DNA-binding protein. The chain is HTH domain-truncated transcriptional regulator QseD (qseD) from Escherichia coli O157:H7.